Consider the following 46-residue polypeptide: MLILFNTFAELPEAYKAFAPTVDVLPLIPLFFFLLVFVWQAAVGFK.

Positions Met1–Ala9 are excised as a propeptide. A helical transmembrane segment spans residues Leu25–Phe45.

The protein belongs to the PsbK family. As to quaternary structure, PSII is composed of 1 copy each of membrane proteins PsbA, PsbB, PsbC, PsbD, PsbE, PsbF, PsbH, PsbI, PsbJ, PsbK, PsbL, PsbM, PsbT, PsbX, PsbY, Psb30/Ycf12, peripheral proteins PsbO, CyanoQ (PsbQ), PsbU, PsbV and a large number of cofactors. It forms dimeric complexes.

It is found in the cellular thylakoid membrane. Its function is as follows. One of the components of the core complex of photosystem II (PSII). PSII is a light-driven water:plastoquinone oxidoreductase that uses light energy to abstract electrons from H(2)O, generating O(2) and a proton gradient subsequently used for ATP formation. It consists of a core antenna complex that captures photons, and an electron transfer chain that converts photonic excitation into a charge separation. The chain is Photosystem II reaction center protein K from Prochlorococcus marinus (strain MIT 9301).